A 432-amino-acid chain; its full sequence is Zinc finger protein 829 (432 aa).

One can recognise a KRAB domain in the interval 35–106 (VMFRDVSIDF…DRELTRGLCS (72 aa)). The segment at 156 to 178 (WECKICGKTFNQNSQFIQHQRIH) adopts a C2H2-type 1 zinc-finger fold. Residues 184–206 (YESKEYGKSFSRGSLVTRHQRIH) form a C2H2-type 2; degenerate zinc finger. 8 C2H2-type zinc fingers span residues 212–234 (YECK…QRIH), 240–262 (YECK…QRIH), 268–290 (YECK…LRIH), 296–318 (YECK…QRMH), 324–346 (YECK…HRIH), 352–374 (YECE…QRIH), 380–402 (YECN…QRIH), and 408–430 (YDCK…EGIH).

This sequence belongs to the krueppel C2H2-type zinc-finger protein family.

It is found in the nucleus. Its function is as follows. May be involved in transcriptional regulation. The polypeptide is Zinc finger protein 829 (ZNF829) (Homo sapiens (Human)).